A 65-amino-acid chain; its full sequence is Neuropeptide-like protein 28 (65 aa).

The signal sequence occupies residues 1–22 (MISTSSILILVFLLACFMATSA). 4 positions are modified to tyrosine amide: tyrosine 29, tyrosine 39, tyrosine 47, and tyrosine 55. Tryptophan 63 carries the post-translational modification Tryptophan amide.

Belongs to the YARP (YGGW-amide related peptide) family.

It localises to the secreted. Functionally, may have antimicrobial activity. The chain is Neuropeptide-like protein 28 (nlp-28) from Caenorhabditis elegans.